The chain runs to 603 residues: Growth-regulating factor 6 (603 aa).

Positions 34-58 are disordered; the sequence is KHGRGNAGDQEHEWRPPAKQARGGD. The QLQ domain occupies 158-193; the sequence is PFTPSQWIELEHQALIYKYLAANSPVPHSLLIPIRR. Residues 223–267 enclose the WRC domain; it reads DPEPGRCRRTDGKKWRCSRDAVADQKYCERHMNRGRHRSRKHVEG. Short sequence motifs (bipartite nuclear localization signal) lie at residues 228–238 and 256–263; these read RCRRTDGKKWR and RGRHRSRK. Low complexity predominate over residues 561-571; it reads FGSVSSSTGSS. The tract at residues 561-582 is disordered; it reads FGSVSSSTGSSPRLENHSVYDG.

The protein belongs to the GRF family.

Its subcellular location is the nucleus. Transcription activator that plays a regulatory role in gibberellin-induced stem elongation. This chain is Growth-regulating factor 6 (GRF6), found in Oryza sativa subsp. japonica (Rice).